Reading from the N-terminus, the 55-residue chain is DNA-directed RNA polymerase subunit Rpo10 (55 aa).

Residues Cys-6, Cys-9, Cys-43, and Cys-44 each coordinate Zn(2+).

This sequence belongs to the archaeal Rpo10/eukaryotic RPB10 RNA polymerase subunit family. Part of the RNA polymerase complex. Zn(2+) is required as a cofactor.

Its subcellular location is the cytoplasm. It catalyses the reaction RNA(n) + a ribonucleoside 5'-triphosphate = RNA(n+1) + diphosphate. Its function is as follows. DNA-dependent RNA polymerase (RNAP) catalyzes the transcription of DNA into RNA using the four ribonucleoside triphosphates as substrates. This chain is DNA-directed RNA polymerase subunit Rpo10, found in Methanothermobacter thermautotrophicus (strain ATCC 29096 / DSM 1053 / JCM 10044 / NBRC 100330 / Delta H) (Methanobacterium thermoautotrophicum).